We begin with the raw amino-acid sequence, 418 residues long: Gamma-glutamyl phosphate reductase (418 aa).

This sequence belongs to the gamma-glutamyl phosphate reductase family.

It localises to the cytoplasm. The enzyme catalyses L-glutamate 5-semialdehyde + phosphate + NADP(+) = L-glutamyl 5-phosphate + NADPH + H(+). Its pathway is amino-acid biosynthesis; L-proline biosynthesis; L-glutamate 5-semialdehyde from L-glutamate: step 2/2. Its function is as follows. Catalyzes the NADPH-dependent reduction of L-glutamate 5-phosphate into L-glutamate 5-semialdehyde and phosphate. The product spontaneously undergoes cyclization to form 1-pyrroline-5-carboxylate. This Clostridium acetobutylicum (strain ATCC 824 / DSM 792 / JCM 1419 / IAM 19013 / LMG 5710 / NBRC 13948 / NRRL B-527 / VKM B-1787 / 2291 / W) protein is Gamma-glutamyl phosphate reductase.